We begin with the raw amino-acid sequence, 595 residues long: (E)-beta-ocimene synthase, chloroplastic (595 aa).

The transit peptide at 1-32 (MSTISINLMSIIRNPLHSKSKRALINKHPSSS) directs the protein to the chloroplast. The Mn(2+) site is built by D350 and D354. The DDXXD motif motif lies at 350–354 (DDVYD). Homodimerization regions lie at residues 356–362 (YGTLDEL) and 428–465 (EEEW…LSIP). N493 and E501 together coordinate Mn(2+).

Belongs to the terpene synthase family. As to quaternary structure, homodimer. It depends on Mn(2+) as a cofactor. Requires Mg(2+) as cofactor. In terms of tissue distribution, expressed in peltate glandular trichomes. Present in flowers, leaves and stems.

The protein resides in the plastid. It localises to the chloroplast. The enzyme catalyses (2E)-geranyl diphosphate = (E)-beta-ocimene + diphosphate. Its pathway is secondary metabolite biosynthesis; terpenoid biosynthesis. Its function is as follows. Involved in the biosynthesis of monoterpenes natural products. Monoterpene synthase that catalyzes mainly the formation of (E)-beta-ocimene and minor amounts of other monoterpenes (e.g. myrcene, (Z)-beta-ocimene, alpha- and gamma-terpinene) from geranyl diphosphate (GPP). This is (E)-beta-ocimene synthase, chloroplastic from Origanum vulgare (Wild marjoram).